The sequence spans 293 residues: Nucleotide-binding protein BC_5156 (293 aa).

Residue 14–21 coordinates ATP; sequence GMSGAGKT. 65-68 contributes to the GTP binding site; the sequence is DLRG.

This sequence belongs to the RapZ-like family.

Functionally, displays ATPase and GTPase activities. The polypeptide is Nucleotide-binding protein BC_5156 (Bacillus cereus (strain ATCC 14579 / DSM 31 / CCUG 7414 / JCM 2152 / NBRC 15305 / NCIMB 9373 / NCTC 2599 / NRRL B-3711)).